The primary structure comprises 257 residues: NAD-capped RNA hydrolase NudC (257 aa).

R69 provides a ligand contact to substrate. The Zn(2+) site is built by C98 and C101. Residue E111 participates in substrate binding. Zn(2+) contacts are provided by C116 and C119. Y124 provides a ligand contact to substrate. In terms of domain architecture, Nudix hydrolase spans 125 to 248; it reads PQIAPCIIVA…TVARRLIEDT (124 aa). 3 residues coordinate a divalent metal cation: A158, E174, and E178. The Nudix box signature appears at 159–180; the sequence is GFVEVGETLEQAVAREVMEESG. 192 to 199 is a binding site for substrate; that stretch reads QPWPFPQS. E219 provides a ligand contact to a divalent metal cation. Residue A241 coordinates substrate.

Belongs to the Nudix hydrolase family. NudC subfamily. In terms of assembly, homodimer. Mg(2+) is required as a cofactor. The cofactor is Mn(2+). It depends on Zn(2+) as a cofactor.

It catalyses the reaction a 5'-end NAD(+)-phospho-ribonucleoside in mRNA + H2O = a 5'-end phospho-adenosine-phospho-ribonucleoside in mRNA + beta-nicotinamide D-ribonucleotide + 2 H(+). The catalysed reaction is NAD(+) + H2O = beta-nicotinamide D-ribonucleotide + AMP + 2 H(+). It carries out the reaction NADH + H2O = reduced beta-nicotinamide D-ribonucleotide + AMP + 2 H(+). In terms of biological role, mRNA decapping enzyme that specifically removes the nicotinamide adenine dinucleotide (NAD) cap from a subset of mRNAs by hydrolyzing the diphosphate linkage to produce nicotinamide mononucleotide (NMN) and 5' monophosphate mRNA. The NAD-cap is present at the 5'-end of some mRNAs and stabilizes RNA against 5'-processing. Has preference for mRNAs with a 5'-end purine. Catalyzes the hydrolysis of a broad range of dinucleotide pyrophosphates. The chain is NAD-capped RNA hydrolase NudC from Klebsiella pneumoniae subsp. pneumoniae (strain ATCC 700721 / MGH 78578).